Here is a 244-residue protein sequence, read N- to C-terminus: MAIKGPRKHLKRLAAPANWQLPRKVKAFTVRPSPGPHSMDKSLPLLLVVRDVLKYADNAREAKKIIQTGKILIDGLKRKEYKHPAGLMDVLSIPEMDENYLVLFDESGRISLKKTDKTDAKLCKIVNKTVIKGGHIQLNLHDGRNQIVKVSDATKAEEDVYKTGDSVLVSIPEQSIVGHVAFGEGKLAYVTGGKHVGEFAKIVEVENRALYSDIVTLENKDGEKFKTVKPYVFIVGQDEPVISM.

Residues 43-106 form the S4 RNA-binding domain; the sequence is LPLLLVVRDV…DENYLVLFDE (64 aa).

Belongs to the eukaryotic ribosomal protein eS4 family.

This chain is Small ribosomal subunit protein eS4, found in Methanococcus maripaludis (strain C7 / ATCC BAA-1331).